The following is a 482-amino-acid chain: Glutamyl-tRNA(Gln) amidotransferase subunit A (482 aa).

Catalysis depends on charge relay system residues lysine 80 and serine 159. Serine 183 serves as the catalytic Acyl-ester intermediate.

The protein belongs to the amidase family. GatA subfamily. In terms of assembly, heterotrimer of A, B and C subunits.

It carries out the reaction L-glutamyl-tRNA(Gln) + L-glutamine + ATP + H2O = L-glutaminyl-tRNA(Gln) + L-glutamate + ADP + phosphate + H(+). In terms of biological role, allows the formation of correctly charged Gln-tRNA(Gln) through the transamidation of misacylated Glu-tRNA(Gln) in organisms which lack glutaminyl-tRNA synthetase. The reaction takes place in the presence of glutamine and ATP through an activated gamma-phospho-Glu-tRNA(Gln). The protein is Glutamyl-tRNA(Gln) amidotransferase subunit A of Neorickettsia sennetsu (strain ATCC VR-367 / Miyayama) (Ehrlichia sennetsu).